We begin with the raw amino-acid sequence, 133 residues long: Fatty acid-binding protein, heart (133 aa).

At Val-2 the chain carries N-acetylvaline. Thr-8 carries the post-translational modification Phosphothreonine. At Tyr-20 the chain carries Phosphotyrosine; by Tyr-kinases. Position 23 is a phosphoserine (Ser-23). Residue Thr-30 is modified to Phosphothreonine. Residue Ser-83 is modified to Phosphoserine. 127-129 (RTY) lines the (9Z)-octadecenoate pocket. Position 127 to 129 (127 to 129 (RTY)) interacts with hexadecanoate. Position 127 to 129 (127 to 129 (RTY)) interacts with octadecanoate.

It belongs to the calycin superfamily. Fatty-acid binding protein (FABP) family.

It localises to the cytoplasm. Its function is as follows. FABPs are thought to play a role in the intracellular transport of long-chain fatty acids and their acyl-CoA esters. In Sus scrofa (Pig), this protein is Fatty acid-binding protein, heart (FABP3).